Here is a 787-residue protein sequence, read N- to C-terminus: Pleckstrin homology domain-containing family G member 6 (787 aa).

The DH domain occupies 161–353; that stretch reads HQQEALWELL…ESFLRHINGQ (193 aa). One can recognise a PH domain in the interval 409 to 509; the sequence is QLLLEGPVRV…WLEKTQHAQT (101 aa). The interval 533–762 is disordered; sequence QGTESPSTRP…EPGNGKPRRL (230 aa). Positions 535–557 are enriched in low complexity; it reads TESPSTRPSTPSPSPEDSQSSAE. Residues 724 to 742 show a composition bias toward basic and acidic residues; the sequence is LRPRSLREDMLREIREELA.

Interacts with MYH10. Interacts with ELMO1 and EZR (in an open conformation). Interacts with CSPP1.

It is found in the cell projection. It localises to the microvillus. The protein resides in the cytoplasm. The protein localises to the cytoskeleton. Its subcellular location is the spindle. It is found in the cleavage furrow. Its function is as follows. Guanine nucleotide exchange factor activating the small GTPase RHOA, which, in turn, induces myosin filament formation. Also activates RHOG. Does not activate RAC1, or to a much lower extent than RHOA and RHOG. Part of a functional unit, involving PLEKHG6, MYH10 and RHOA, at the cleavage furrow to advance furrow ingression during cytokinesis. In epithelial cells, required for the formation of microvilli and membrane ruffles on the apical pole. Along with EZR, required for normal macropinocytosis. This chain is Pleckstrin homology domain-containing family G member 6 (Plekhg6), found in Mus musculus (Mouse).